A 429-amino-acid chain; its full sequence is 4-hydroxyphenylacetate degradation bifunctional isomerase/decarboxylase (429 aa).

Approximate repeat units follow at residues Met-1–Phe-215 and Thr-216–Asn-429. A divalent metal cation-binding residues include Glu-276, Glu-278, and Asp-307.

Belongs to the FAH family. Monomer. Mg(2+) is required as a cofactor.

The enzyme catalyses (2E,4Z)-5-hydroxypenta-2,4-diene-1,2,5-tricarboxylate = (3E,5R)-5-carboxy-2-oxohept-3-enedioate. It carries out the reaction (3E,5R)-5-carboxy-2-oxohept-3-enedioate + H(+) = (4Z)-2-oxohept-4-enedioate + CO2. It participates in aromatic compound metabolism; 4-hydroxyphenylacetate degradation; pyruvate and succinate semialdehyde from 4-hydroxyphenylacetate: step 4/7. It functions in the pathway aromatic compound metabolism; 4-hydroxyphenylacetate degradation; pyruvate and succinate semialdehyde from 4-hydroxyphenylacetate: step 5/7. Functionally, decarboxylates OPET (5-oxo-pent-3-ene-1,2,5-tricarboxylic acid) into HHDD (2-hydroxy-hept-2,4-diene-1,7-dioate) and isomerizes it to OHED (2-oxo-hept-3-ene-1,7-dioate). This is 4-hydroxyphenylacetate degradation bifunctional isomerase/decarboxylase (hpaG) from Salmonella dublin.